Reading from the N-terminus, the 467-residue chain is Argininosuccinate lyase (467 aa).

Belongs to the lyase 1 family. Argininosuccinate lyase subfamily.

The protein resides in the cytoplasm. It carries out the reaction 2-(N(omega)-L-arginino)succinate = fumarate + L-arginine. It participates in amino-acid biosynthesis; L-arginine biosynthesis; L-arginine from L-ornithine and carbamoyl phosphate: step 3/3. The protein is Argininosuccinate lyase of Campylobacter curvus (strain 525.92).